Here is a 62-residue protein sequence, read N- to C-terminus: Disintegrin schistatin-like subunit A (62 aa).

One can recognise a Disintegrin domain in the interval 1–62 (SVNPCCDPVI…TTDCPRNRYN (62 aa)). Cystine bridges form between C5–C28, C19–C25, C24–C49, and C37–C56. The short motif at 41-43 (RGD) is the Cell attachment site element.

The protein belongs to the disintegrin family. Dimeric disintegrin subfamily. In terms of assembly, heterodimer with subunit B; disulfide-linked. Expressed by the venom gland.

The protein localises to the secreted. Its function is as follows. May bind to both alpha-IIb/beta-3 (ITGA2B/ITGB3) and alpha-V/beta-3 (ITGAV/ITGB3) integrins, and may inhibit platelet aggregation. This is Disintegrin schistatin-like subunit A from Echis carinatus (Saw-scaled viper).